The chain runs to 91 residues: DNA-directed RNA polymerase subunit omega (91 aa).

Belongs to the RNA polymerase subunit omega family. The RNAP catalytic core consists of 2 alpha, 1 beta, 1 beta' and 1 omega subunit. When a sigma factor is associated with the core the holoenzyme is formed, which can initiate transcription.

The catalysed reaction is RNA(n) + a ribonucleoside 5'-triphosphate = RNA(n+1) + diphosphate. Its function is as follows. Promotes RNA polymerase assembly. Latches the N- and C-terminal regions of the beta' subunit thereby facilitating its interaction with the beta and alpha subunits. In Photorhabdus laumondii subsp. laumondii (strain DSM 15139 / CIP 105565 / TT01) (Photorhabdus luminescens subsp. laumondii), this protein is DNA-directed RNA polymerase subunit omega.